A 146-amino-acid chain; its full sequence is Ribosome maturation factor RimP (146 aa).

Belongs to the RimP family.

It localises to the cytoplasm. Its function is as follows. Required for maturation of 30S ribosomal subunits. This chain is Ribosome maturation factor RimP, found in Helicobacter pylori (strain G27).